Here is a 450-residue protein sequence, read N- to C-terminus: MSVSGGRTRVGRYELGRTLGEGTFAKVKFARNADSGENVAIKILDKDKVLKHKMIAQIKREISTMKLIRHPNVIRMHEVMASKTKIYIVMELVTGGELFDKIASRGRLKEDDARKYFQQLINAVDYCHSRGVYHRDLKPENLLLDASGTLKVSDFGLSALSQQVREDGLLHTTCGTPNYVAPEVINNKGYDGAKADLWSCGVILFVLMAGYLPFEDSNLMSLYKKIFKADFSCPSWFSTSAKKLIKKILDPNPSTRITIAELINNEWFKKGYQPPRFETADVNLDDINSIFNESGDQTQLVVERREERPSVMNAFELISTSQGLNLGTLFEKQSQGSVKRETRFASRLPANEILSKIEAAAGPMGFNVQKRNYKLKLQGENPGRKGQLAIATEVFEVTPSLYMVELRKSNGDTLEFHKFYHNISNGLKDVMWKPESSIIAGDEIQHRRSP.

A Protein kinase domain is found at Tyr-13–Phe-268. Residues Leu-19–Val-27 and Lys-42 contribute to the ATP site. Catalysis depends on Asp-136, which acts as the Proton acceptor. Positions Asp-154–Glu-183 are activation loop. The region spanning Glu-306–Glu-331 is the NAF domain. A PPI region spans residues Lys-339 to Val-368.

It belongs to the protein kinase superfamily. CAMK Ser/Thr protein kinase family. SNF1 subfamily. Mn(2+) is required as a cofactor.

It catalyses the reaction L-seryl-[protein] + ATP = O-phospho-L-seryl-[protein] + ADP + H(+). The enzyme catalyses L-threonyl-[protein] + ATP = O-phospho-L-threonyl-[protein] + ADP + H(+). In terms of biological role, CIPK serine-threonine protein kinases interact with CBL proteins. Binding of a CBL protein to the regulatory NAF domain of CIPK protein lead to the activation of the kinase in a calcium-dependent manner. This Oryza sativa subsp. japonica (Rice) protein is CBL-interacting protein kinase 23 (CIPK23).